A 198-amino-acid chain; its full sequence is MSTEISAAAPRRAANGKKRANRRKKRRTQAESDSSDSSDSSESSQPSADEQEAKTDDVAVELSDVELSDSENKTVSHSEKLDDESKAKLKSIQLTATDLSSKFALQQNRNIDLQKAGREVDHGLEKLAKLDAQTSEQESGRLKTGYINMLFEHVGEDVNQLRNAPDFTPKSLVVLANALKDGGDMFDIESLRALVDNK.

The disordered stretch occupies residues 1–84 (MSTEISAAAP…VSHSEKLDDE (84 aa)). Positions 14 to 27 (ANGKKRANRRKKRR) are enriched in basic residues. Positions 31-48 (ESDSSDSSDSSESSQPSA) are enriched in low complexity. The segment covering 70–84 (SENKTVSHSEKLDDE) has biased composition (basic and acidic residues).

Belongs to the RSA3 family. As to quaternary structure, associates with nucleolar pre-ribosomal particles.

It localises to the nucleus. The protein resides in the nucleolus. Its function is as follows. Required for efficient biogenesis of the 60S ribosomal subunit. The polypeptide is Ribosome assembly protein 3 (RSA3) (Eremothecium gossypii (strain ATCC 10895 / CBS 109.51 / FGSC 9923 / NRRL Y-1056) (Yeast)).